A 349-amino-acid polypeptide reads, in one-letter code: Isopentenyl-diphosphate delta-isomerase (349 aa).

6–7 contacts substrate; the sequence is RK. FMN-binding positions include 62 to 64, serine 93, and asparagine 122; that span reads AMT. Glutamine 152 provides a ligand contact to substrate. Glutamate 153 provides a ligand contact to Mg(2+). FMN-binding positions include lysine 184, threonine 214, 258 to 259, and 280 to 281; these read GG and AG.

It belongs to the IPP isomerase type 2 family. As to quaternary structure, homooctamer. Dimer of tetramers. It depends on FMN as a cofactor. Requires NADPH as cofactor. Mg(2+) serves as cofactor.

It localises to the cytoplasm. It carries out the reaction isopentenyl diphosphate = dimethylallyl diphosphate. In terms of biological role, involved in the biosynthesis of isoprenoids. Catalyzes the 1,3-allylic rearrangement of the homoallylic substrate isopentenyl (IPP) to its allylic isomer, dimethylallyl diphosphate (DMAPP). The polypeptide is Isopentenyl-diphosphate delta-isomerase (Bacillus mycoides (strain KBAB4) (Bacillus weihenstephanensis)).